Here is a 406-residue protein sequence, read N- to C-terminus: uncharacterized protein (406 aa).

It belongs to the mycobacterial PPE family.

This is an uncharacterized protein from Mycobacterium tuberculosis (strain CDC 1551 / Oshkosh).